Here is a 114-residue protein sequence, read N- to C-terminus: T cell receptor beta variable 4-3 (114 aa).

The signal sequence occupies residues 1–21; that stretch reads MGCRLLCCAVLCLLGAVPMET. The region spanning 22 to 114 is the Ig-like domain; sequence GVTQTPRHLV…SALYLCASSQ (93 aa). C42 and C110 are oxidised to a cystine. 2 N-linked (GlcNAc...) asparagine glycosylation sites follow: N76 and N89.

As to quaternary structure, alpha-beta TR is a heterodimer composed of an alpha and beta chain; disulfide-linked. The alpha-beta TR is associated with the transmembrane signaling CD3 coreceptor proteins to form the TR-CD3 (TcR or TCR). The assembly of alpha-beta TR heterodimers with CD3 occurs in the endoplasmic reticulum where a single alpha-beta TR heterodimer associates with one CD3D-CD3E heterodimer, one CD3G-CD3E heterodimer and one CD247 homodimer forming a stable octameric structure. CD3D-CD3E and CD3G-CD3E heterodimers preferentially associate with TR alpha and TR beta chains, respectively. The association of the CD247 homodimer is the last step of TcR assembly in the endoplasmic reticulum and is required for transport to the cell surface.

Its subcellular location is the cell membrane. Functionally, v region of the variable domain of T cell receptor (TR) beta chain that participates in the antigen recognition. Alpha-beta T cell receptors are antigen specific receptors which are essential to the immune response and are present on the cell surface of T lymphocytes. Recognize peptide-major histocompatibility (MH) (pMH) complexes that are displayed by antigen presenting cells (APC), a prerequisite for efficient T cell adaptive immunity against pathogens. Binding of alpha-beta TR to pMH complex initiates TR-CD3 clustering on the cell surface and intracellular activation of LCK that phosphorylates the ITAM motifs of CD3G, CD3D, CD3E and CD247 enabling the recruitment of ZAP70. In turn ZAP70 phosphorylates LAT, which recruits numerous signaling molecules to form the LAT signalosome. The LAT signalosome propagates signal branching to three major signaling pathways, the calcium, the mitogen-activated protein kinase (MAPK) kinase and the nuclear factor NF-kappa-B (NF-kB) pathways, leading to the mobilization of transcription factors that are critical for gene expression and essential for T cell growth and differentiation. The T cell repertoire is generated in the thymus, by V-(D)-J rearrangement. This repertoire is then shaped by intrathymic selection events to generate a peripheral T cell pool of self-MH restricted, non-autoaggressive T cells. Post-thymic interaction of alpha-beta TR with the pMH complexes shapes TR structural and functional avidity. This is T cell receptor beta variable 4-3 from Homo sapiens (Human).